Here is a 167-residue protein sequence, read N- to C-terminus: Protein-lysine myristoyltransferase RtxC (167 aa).

Active-site residues include His-20 and Asp-89.

This sequence belongs to the RTX toxin acyltransferase family.

The protein resides in the cytoplasm. It carries out the reaction tetradecanoyl-[ACP] + L-lysyl-[protein] = N(6)-tetradecanoyl-L-lysyl-[protein] + holo-[ACP] + H(+). Its function is as follows. Protein-lysine myristoyltransferase that catalyzes myristoylation of the protoxin (RtxA) at two internal lysine residues, thereby converting it to the active toxin. In Kingella kingae, this protein is Protein-lysine myristoyltransferase RtxC.